A 430-amino-acid polypeptide reads, in one-letter code: Histidinol dehydrogenase (430 aa).

Residues Tyr124, Gln185, and Asn208 each coordinate NAD(+). Substrate-binding residues include Ser233, Gln255, and His258. Zn(2+) contacts are provided by Gln255 and His258. Catalysis depends on proton acceptor residues Glu324 and His325. Residues His325, Asp358, Glu412, and His418 each coordinate substrate. Asp358 serves as a coordination point for Zn(2+). His418 contributes to the Zn(2+) binding site.

The protein belongs to the histidinol dehydrogenase family. Zn(2+) serves as cofactor.

The enzyme catalyses L-histidinol + 2 NAD(+) + H2O = L-histidine + 2 NADH + 3 H(+). It participates in amino-acid biosynthesis; L-histidine biosynthesis; L-histidine from 5-phospho-alpha-D-ribose 1-diphosphate: step 9/9. Its function is as follows. Catalyzes the sequential NAD-dependent oxidations of L-histidinol to L-histidinaldehyde and then to L-histidine. This chain is Histidinol dehydrogenase, found in Leptospira biflexa serovar Patoc (strain Patoc 1 / Ames).